A 622-amino-acid polypeptide reads, in one-letter code: Threonine--tRNA ligase (622 aa).

The segment at 1–136 is editing domain; sequence MKTLLIHSDY…PLSELSRKIT (136 aa). Positions 199–498 are catalytic; that stretch reads PHVKYIKEKE…TLENKPPALP (300 aa). Residues C291, H343, and H467 each coordinate Zn(2+).

The protein belongs to the class-II aminoacyl-tRNA synthetase family. In terms of assembly, homodimer. Zn(2+) serves as cofactor.

It localises to the cytoplasm. The enzyme catalyses tRNA(Thr) + L-threonine + ATP = L-threonyl-tRNA(Thr) + AMP + diphosphate + H(+). Catalyzes the attachment of threonine to tRNA(Thr) in a two-step reaction: L-threonine is first activated by ATP to form Thr-AMP and then transferred to the acceptor end of tRNA(Thr). Also edits incorrectly charged L-seryl-tRNA(Thr). The sequence is that of Threonine--tRNA ligase from Methanococcus maripaludis (strain DSM 14266 / JCM 13030 / NBRC 101832 / S2 / LL).